We begin with the raw amino-acid sequence, 373 residues long: MSLFFLWLVSYYVGTLGTHTEIKRVAEEKVTLPCHHQLGLPEKDTLDIEWLLTDNEGNQKVVITYSSRHVYNNLTEEQKGRVAFASNFLAGDASLQIEPLKPSDEGRYTCKVKNSGRYVWSHVILKVLVRPSKPKCELEGEPTEGSDLTLQCESASGTKPIVYYWQRIREKEGEDEHLPPKSRIDYNNPGRVLLQNLTMASSGLYQCTAGNEAGKESCVVRVTVQYVQSIGMVAGAVTGIVAGALLIFLLIWLLIRRKSKDRYEEEDRPNEIREDAEAPRARLVKPSSSSSGSRSSRSGSSSTRSTGNSASRSQRTLSSEAAPQQPGLAPQAYSLIGPEVRGSEPKKVHHTTLTKAETTLSTTPSQSKAFQTV.

Residues 1 to 17 (MSLFFLWLVSYYVGTLG) form the signal peptide. Ig-like C2-type domains are found at residues 18 to 126 (THTE…VILK) and 134 to 223 (PKCE…VRVT). The Extracellular portion of the chain corresponds to 18 to 234 (THTEIKRVAE…QYVQSIGMVA (217 aa)). Disulfide bonds link C34-C110 and C152-C207. 2 N-linked (GlcNAc...) asparagine glycosylation sites follow: N73 and N196. The chain crosses the membrane as a helical span at residues 235–255 (GAVTGIVAGALLIFLLIWLLI). Over 256-373 (RRKSKDRYEE…PSQSKAFQTV (118 aa)) the chain is Cytoplasmic. The span at 263-280 (YEEEDRPNEIREDAEAPR) shows a compositional bias: basic and acidic residues. The disordered stretch occupies residues 263–373 (YEEEDRPNEI…PSQSKAFQTV (111 aa)). Low complexity-rich tracts occupy residues 287–313 (SSSS…ASRS), 321–332 (AAPQQPGLAPQA), and 353–363 (LTKAETTLSTT). A compositionally biased stretch (polar residues) spans 364–373 (PSQSKAFQTV).

In terms of tissue distribution, predominantly expressed in epithelial cells within different tissues and in the white adipose tissue. Expressed at high levels in the heart and brain, at intermediate levels in the lung, skeletal muscle, kidney and testis and at low levels in the liver and spleen.

Its subcellular location is the cell junction. The protein resides in the tight junction. It is found in the cell membrane. Functionally, may be involved in the cell-cell adhesion. May play a role in adipocyte differentiation and development of obesity. Is required for normal small intestine development. The polypeptide is CXADR-like membrane protein (Clmp) (Mus musculus (Mouse)).